Consider the following 142-residue polypeptide: Hemoglobin subunit alpha-1 (142 aa).

Residues 2–142 (KLSADDKHNV…VGYVLASKYR (141 aa)) enclose the Globin domain. Position 59 (H59) interacts with O2. Residue H88 participates in heme b binding.

The protein belongs to the globin family. As to quaternary structure, major hemoglobin is a heterotetramer of two alpha-1 chains and two beta-1 chains. In terms of tissue distribution, red blood cells.

Its function is as follows. Involved in oxygen transport from the lung to the various peripheral tissues. In Triturus cristatus (Great crested newt), this protein is Hemoglobin subunit alpha-1.